A 769-amino-acid chain; its full sequence is Probable beta-glucosidase M (769 aa).

Positions 1 to 22 are cleaved as a signal peptide; it reads MHSNLGLAGLAGLLATASVCLS. N-linked (GlcNAc...) asparagine glycosylation is found at Asn28, Asn75, and Asn262. The active site involves Asp290. N-linked (GlcNAc...) asparagine glycans are attached at residues Asn318, Asn325, Asn437, and Asn546.

This sequence belongs to the glycosyl hydrolase 3 family.

It is found in the secreted. It carries out the reaction Hydrolysis of terminal, non-reducing beta-D-glucosyl residues with release of beta-D-glucose.. The protein operates within glycan metabolism; cellulose degradation. Functionally, beta-glucosidases are one of a number of cellulolytic enzymes involved in the degradation of cellulosic biomass. Catalyzes the last step releasing glucose from the inhibitory cellobiose. This chain is Probable beta-glucosidase M (bglM), found in Neosartorya fischeri (strain ATCC 1020 / DSM 3700 / CBS 544.65 / FGSC A1164 / JCM 1740 / NRRL 181 / WB 181) (Aspergillus fischerianus).